We begin with the raw amino-acid sequence, 700 residues long: Elongation factor G 2 (700 aa).

Residues 8–290 enclose the tr-type G domain; that stretch reads ERYRNIGISA…AVVDYLPSPI (283 aa). GTP contacts are provided by residues 17–24, 88–92, and 142–145; these read AHIDAGKT, DTPGH, and NKMD.

It belongs to the TRAFAC class translation factor GTPase superfamily. Classic translation factor GTPase family. EF-G/EF-2 subfamily.

It localises to the cytoplasm. Its function is as follows. Catalyzes the GTP-dependent ribosomal translocation step during translation elongation. During this step, the ribosome changes from the pre-translocational (PRE) to the post-translocational (POST) state as the newly formed A-site-bound peptidyl-tRNA and P-site-bound deacylated tRNA move to the P and E sites, respectively. Catalyzes the coordinated movement of the two tRNA molecules, the mRNA and conformational changes in the ribosome. This Ralstonia nicotianae (strain ATCC BAA-1114 / GMI1000) (Ralstonia solanacearum) protein is Elongation factor G 2 (fusB).